The primary structure comprises 860 residues: Nuclear pore complex protein NUP93B (860 aa).

This sequence belongs to the nucleoporin interacting component (NIC) family. As to quaternary structure, part of the nuclear pore complex (NPC). The NPC has an eight-fold symmetrical structure comprising a central transport channel and two rings, the cytoplasmic and nuclear rings, to which eight filaments are attached. The cytoplasmic filaments have loose ends, while the nuclear filaments are joined in a distal ring, forming a nuclear basket. NPCs are highly dynamic in configuration and composition, and can be devided in 3 subcomplexes, the NUP62 subcomplex, the NUP107-160 subcomplex and the NUP93 subcomplex, containing approximately 30 different nucleoporin proteins.

The protein localises to the nucleus envelope. Its subcellular location is the nucleus. It localises to the nuclear pore complex. The chain is Nuclear pore complex protein NUP93B from Arabidopsis thaliana (Mouse-ear cress).